The chain runs to 700 residues: Elongation factor G (700 aa).

In terms of domain architecture, tr-type G spans 10-286; it reads NKVRNIGIMA…AVIDYLPNPL (277 aa). GTP contacts are provided by residues 19 to 26, 83 to 87, and 137 to 140; these read AHIDAGKT, DTPGH, and NKMD.

It belongs to the TRAFAC class translation factor GTPase superfamily. Classic translation factor GTPase family. EF-G/EF-2 subfamily.

It localises to the cytoplasm. Functionally, catalyzes the GTP-dependent ribosomal translocation step during translation elongation. During this step, the ribosome changes from the pre-translocational (PRE) to the post-translocational (POST) state as the newly formed A-site-bound peptidyl-tRNA and P-site-bound deacylated tRNA move to the P and E sites, respectively. Catalyzes the coordinated movement of the two tRNA molecules, the mRNA and conformational changes in the ribosome. This Rhodococcus opacus (strain B4) protein is Elongation factor G.